The following is a 476-amino-acid chain: Aspartyl/glutamyl-tRNA(Asn/Gln) amidotransferase subunit B (476 aa).

This sequence belongs to the GatB/GatE family. GatB subfamily. In terms of assembly, heterotrimer of A, B and C subunits.

The enzyme catalyses L-glutamyl-tRNA(Gln) + L-glutamine + ATP + H2O = L-glutaminyl-tRNA(Gln) + L-glutamate + ADP + phosphate + H(+). The catalysed reaction is L-aspartyl-tRNA(Asn) + L-glutamine + ATP + H2O = L-asparaginyl-tRNA(Asn) + L-glutamate + ADP + phosphate + 2 H(+). Allows the formation of correctly charged Asn-tRNA(Asn) or Gln-tRNA(Gln) through the transamidation of misacylated Asp-tRNA(Asn) or Glu-tRNA(Gln) in organisms which lack either or both of asparaginyl-tRNA or glutaminyl-tRNA synthetases. The reaction takes place in the presence of glutamine and ATP through an activated phospho-Asp-tRNA(Asn) or phospho-Glu-tRNA(Gln). This Solidesulfovibrio magneticus (strain ATCC 700980 / DSM 13731 / RS-1) (Desulfovibrio magneticus) protein is Aspartyl/glutamyl-tRNA(Asn/Gln) amidotransferase subunit B.